A 413-amino-acid polypeptide reads, in one-letter code: MKPRVLGMILAGGQGSRLAPLTQKRSKPAVPFGSKYRIIDFAINNFINSGMFSVYVLTQYKAQSLTEHIQRGWRFGTFLSDYFITLVPAQMYRFEELGDAWYRGTADAVYQNMHLIDNFEADYVAIFSGDHIYKMNVEHMLEKHIETRADVTIAAYPMPQSQAHQFGVMQVDERWRVTEFHEKVPDPPTIPGQADLSLTSMGNYIFSRRALEELLEASISGQETGYDFGHNVIPRALSDGYHVQAYDFHKNPIPGQERPNTYWRDVGTLDAYFEANMDLVSVNPEFDIYNPEWPLRTSSEFSPPAKFVHESEGRKGQAFNSIMAGGAIISGGTVRDSVLGRNVRTHSYSLVESCVLFDDVQVGRHSHLRRVIVDKDVVIPPGTTIGLNREHDEQRGFTVTEHGVVVVPKGYVF.

Alpha-D-glucose 1-phosphate is bound by residues Y102, G167, 182 to 183 (EK), and S200.

Belongs to the bacterial/plant glucose-1-phosphate adenylyltransferase family. As to quaternary structure, homotetramer.

The catalysed reaction is alpha-D-glucose 1-phosphate + ATP + H(+) = ADP-alpha-D-glucose + diphosphate. It participates in glycan biosynthesis; glycogen biosynthesis. Its function is as follows. Involved in the biosynthesis of ADP-glucose, a building block required for the elongation reactions to produce glycogen. Catalyzes the reaction between ATP and alpha-D-glucose 1-phosphate (G1P) to produce pyrophosphate and ADP-Glc. The protein is Glucose-1-phosphate adenylyltransferase of Deinococcus radiodurans (strain ATCC 13939 / DSM 20539 / JCM 16871 / CCUG 27074 / LMG 4051 / NBRC 15346 / NCIMB 9279 / VKM B-1422 / R1).